Consider the following 255-residue polypeptide: Folate receptor beta (255 aa).

Residues 1-16 form the signal peptide; sequence MVWKWMPLLLLLVCVA. Cystine bridges form between cysteine 31–cysteine 59, cysteine 51–cysteine 99, cysteine 60–cysteine 103, cysteine 83–cysteine 169, cysteine 90–cysteine 140, cysteine 129–cysteine 203, cysteine 133–cysteine 183, and cysteine 146–cysteine 163. Positions 97 and 101 each coordinate folate. The N-linked (GlcNAc...) asparagine glycan is linked to asparagine 115. Residues 118–122, 151–156, and serine 190 each bind folate; these read WRKER and HRGWDW. A glycan (N-linked (GlcNAc...) asparagine) is linked at asparagine 195. Asparagine 230 is lipidated: GPI-anchor amidated asparagine. Residues 231-255 constitute a propeptide, removed in mature form; the sequence is AGEMLHGTGGLLLSLALMLQLWLLG.

This sequence belongs to the folate receptor family. Post-translationally, N-glycosylated. As to expression, expressed in placenta and hematopoietic cells. Expression is increased in malignant tissues.

It localises to the cell membrane. The protein resides in the secreted. Its function is as follows. Binds to folate and reduced folic acid derivatives and mediates delivery of 5-methyltetrahydrofolate and folate analogs into the interior of cells. Has high affinity for folate and folic acid analogs at neutral pH. Exposure to slightly acidic pH after receptor endocytosis triggers a conformation change that strongly reduces its affinity for folates and mediates their release. This Homo sapiens (Human) protein is Folate receptor beta (FOLR2).